Reading from the N-terminus, the 435-residue chain is MKFFLATLFASAVSSIAVDRLIPGAQIIPESDTRALLRVGGHHDKYHDRRTITIRPSRNDTDDVSRDFLWGIKHANHGGRLLLKKGEKYVIGRKLDLTFLDDIEVQLDGELKFTDDVSYWQENNFYYDFQKSITFWRWGGKDIKIFGTGLLNGNGQRWYNEFAGQEILDPDNEYYRPILFLTENATRISVEGITQLNSPCWTNFFIQSKDVSFDDVYIHAFSTNKSALPKNSDGFDSLNVDGLTVTNTRVDVGDDCFSPKPNTTNIFVQNLLCNNTHGVSMGSIGQYPGVMDIIEHAYIENVTLLNGQNGARLKAWAGQDVGYGRINNITYKNIRIENTDAPVVLDQCYFDIEAAECAQYPSQVNVTNILFENISGTSSGKNGKVVADLVCSPNAVCSDIQLKNINLTSPAGSPPEIICEGVQGDIGVECQASAD.

An N-terminal signal peptide occupies residues 1-15 (MKFFLATLFASAVSS). 3 N-linked (GlcNAc...) asparagine glycosylation sites follow: N59, N184, and N224. 5 PbH1 repeats span residues 208 to 239 (SKDV…DSLN), 240 to 261 (VDGL…SPKP), 262 to 283 (NTTN…SMGS), 294 to 315 (IEHA…RLKA), and 326 to 347 (INNI…VLDQ). D254 functions as the Proton donor in the catalytic mechanism. A disulfide bridge connects residues C256 and C273. 2 N-linked (GlcNAc...) asparagine glycosylation sites follow: N262 and N274. Residue H277 is part of the active site. Residues N301, N328, N365, and N373 are each glycosylated (N-linked (GlcNAc...) asparagine). The stretch at 366–388 (VTNILFENISGTSSGKNGKVVAD) is one PbH1 6 repeat. A disulfide bond links C391 and C397. The N-linked (GlcNAc...) asparagine glycan is linked to N406.

It belongs to the glycosyl hydrolase 28 family.

It is found in the secreted. It catalyses the reaction [(1-&gt;4)-alpha-D-galacturonosyl](n) + H2O = alpha-D-galacturonate + [(1-&gt;4)-alpha-D-galacturonosyl](n-1). Specific in hydrolyzing the terminal glycosidic bond of polygalacturonic acid and oligogalacturonates. This chain is Probable exopolygalacturonase B (pgxB), found in Aspergillus oryzae (strain ATCC 42149 / RIB 40) (Yellow koji mold).